A 77-amino-acid chain; its full sequence is Large ribosomal subunit protein uL29 (77 aa).

It belongs to the universal ribosomal protein uL29 family.

The polypeptide is Large ribosomal subunit protein uL29 (Corynebacterium jeikeium (strain K411)).